A 238-amino-acid polypeptide reads, in one-letter code: Ribonuclease PH (238 aa).

Residues R86 and 124–126 (GTR) each bind phosphate.

It belongs to the RNase PH family. Homohexameric ring arranged as a trimer of dimers.

The enzyme catalyses tRNA(n+1) + phosphate = tRNA(n) + a ribonucleoside 5'-diphosphate. Phosphorolytic 3'-5' exoribonuclease that plays an important role in tRNA 3'-end maturation. Removes nucleotide residues following the 3'-CCA terminus of tRNAs; can also add nucleotides to the ends of RNA molecules by using nucleoside diphosphates as substrates, but this may not be physiologically important. Probably plays a role in initiation of 16S rRNA degradation (leading to ribosome degradation) during starvation. This Proteus mirabilis (strain HI4320) protein is Ribonuclease PH.